Reading from the N-terminus, the 71-residue chain is Small ribosomal subunit protein bS21 (71 aa).

Belongs to the bacterial ribosomal protein bS21 family.

The chain is Small ribosomal subunit protein bS21 from Shewanella sediminis (strain HAW-EB3).